We begin with the raw amino-acid sequence, 326 residues long: Adenosine receptor A1 (326 aa).

The Extracellular portion of the chain corresponds to 1–10 (MPPYISAFQA). A helical membrane pass occupies residues 11–33 (AYIGIEVLIALVSVPGNVLVIWA). Residues 34-46 (VKVNQALRDATFC) lie on the Cytoplasmic side of the membrane. The helical transmembrane segment at 47 to 69 (FIVSLAVADVAVGALVIPLAILI) threads the bilayer. The Extracellular portion of the chain corresponds to 70–80 (NIGPQTYFHTC). Residues Cys-80 and Cys-169 are joined by a disulfide bond. The chain crosses the membrane as a helical span at residues 81–102 (LMVACPVLILTQSSILALLAIA). At 103-123 (VDRYLRVKIPLRYKTVVTQRR) the chain is on the cytoplasmic side. Residues 124–146 (AAVAIAGCWILSLVVGLTPMFGW) traverse the membrane as a helical segment. The Extracellular portion of the chain corresponds to 147–176 (NNLSEVEQAWIANGSVGEPVIKCEFEKVIS). Residues Asn-148 and Asn-159 are each glycosylated (N-linked (GlcNAc...) asparagine). Residues 177-201 (MEYMVYFNFFVWVLPPLLLMVLIYL) form a helical membrane-spanning segment. Over 202 to 235 (EVFYLIRKQLNKKVSASSGDPQKYYGKELKIAKS) the chain is Cytoplasmic. A helical membrane pass occupies residues 236–259 (LALILFLFALSWLPLHILNCITLF). Over 260 to 267 (CPTCQKPS) the chain is Extracellular. The helical transmembrane segment at 268 to 292 (ILIYIAIFLTHGNSAMNPIVYAFRI) threads the bilayer. The Cytoplasmic segment spans residues 293 to 326 (HKFRVTFLKIWNDHFRCQPKPPIEEDIPEEKADD). Residue Cys-309 is the site of S-palmitoyl cysteine attachment.

It belongs to the G-protein coupled receptor 1 family.

Its subcellular location is the cell membrane. In terms of biological role, receptor for adenosine. The activity of this receptor is mediated by G proteins which inhibit adenylyl cyclase. The chain is Adenosine receptor A1 (Adora1) from Mus musculus (Mouse).